The sequence spans 218 residues: Ras-related protein RabO (218 aa).

G15–T22 is a GTP binding site. The Effector region motif lies at R37–F45. GTP contacts are provided by residues D63–Q67 and N122–D125. C215 carries the post-translational modification Cysteine methyl ester. C215 is lipidated: S-geranylgeranyl cysteine. Positions F216 to L218 are cleaved as a propeptide — removed in mature form.

The protein belongs to the small GTPase superfamily. Rab family.

It is found in the cell membrane. In Dictyostelium discoideum (Social amoeba), this protein is Ras-related protein RabO (rabO).